The chain runs to 104 residues: Thioredoxin-3 (104 aa).

A Thioredoxin domain is found at 2 to 104 (SKVIHVTSNE…TLRSTLEANI (103 aa)). Catalysis depends on nucleophile residues Cys31 and Cys34. Cys31 and Cys34 are oxidised to a cystine.

This sequence belongs to the thioredoxin family.

Functionally, participates in various redox reactions through the reversible oxidation of its active center dithiol to a disulfide and catalyzes dithiol-disulfide exchange reactions. The polypeptide is Thioredoxin-3 (trxC) (Dictyostelium discoideum (Social amoeba)).